We begin with the raw amino-acid sequence, 228 residues long: 7-cyano-7-deazaguanine synthase (228 aa).

9 to 19 (LSGGPDSTTVL) is an ATP binding site. Zn(2+) is bound by residues Cys193, Cys203, Cys206, and Cys209.

It belongs to the QueC family. It depends on Zn(2+) as a cofactor.

The enzyme catalyses 7-carboxy-7-deazaguanine + NH4(+) + ATP = 7-cyano-7-deazaguanine + ADP + phosphate + H2O + H(+). Its pathway is purine metabolism; 7-cyano-7-deazaguanine biosynthesis. Its function is as follows. Catalyzes the ATP-dependent conversion of 7-carboxy-7-deazaguanine (CDG) to 7-cyano-7-deazaguanine (preQ(0)). This Rickettsia rickettsii (strain Iowa) protein is 7-cyano-7-deazaguanine synthase.